Consider the following 780-residue polypeptide: E3 SUMO-protein ligase gei-17 (780 aa).

Positions 181-210 (APLHSSFPNHGRSSQQSLQKSEKSNRPKKM) are disordered. Residues 203 to 367 (KSNRPKKMYA…AAGVYFVHRV (165 aa)) form the PINIT domain. The segment at 400 to 485 (GEDDIAMDRL…LAKVDKNTTE (86 aa)) adopts an SP-RING-type zinc-finger fold. Zn(2+)-binding residues include Cys-431, His-433, Cys-454, and Cys-457. Positions 519–530 (GTASCSSTNGNG) are enriched in polar residues. Disordered regions lie at residues 519 to 544 (GTAS…ADDD), 560 to 594 (IMNS…KTKD), and 732 to 755 (QQHH…SFYA). Positions 732–749 (QQHHLQQQQQQQQSPQIM) are enriched in low complexity.

Belongs to the PIAS family. As to quaternary structure, may interact with gex-3.

It participates in protein modification; protein sumoylation. Functionally, functions as an E3-type smo-1 ligase. Mediates smo-1 conjugation to air-2 in vitro and is required for proper chromosome alignment. In the early embryo, specifically suppresses checkpoint activation in response to DNA damage, maybe by promoting mus-101 sumoylation. In embryos, plays a role in determining telomere localization in the nucleus. Acts with pie-1 to promote piRNA-mediated silencing and fertility in the adult germline. In Caenorhabditis elegans, this protein is E3 SUMO-protein ligase gei-17.